The following is a 508-amino-acid chain: WD repeat-containing protein JIP5 (508 aa).

6 WD repeats span residues 62-105 (EARK…WRTK), 106-145 (RHKGSVRALAIDHDGKHVYTIGADNVLKKADTHSGKVVKK), 149-188 (DGGSKVTKLVKSATHDFLVMGDEVGTIVVLDSNDLTTKNT), 193-233 (HGGD…MKQP), 253-294 (DQED…LEDQ), and 345-382 (SGLDEVGMLDLDFEYRLVSGGMDKLKIWEVPKEENSDS). Residues 376–508 (KEENSDSDSD…SHGITKFDGL (133 aa)) are disordered. Over residues 380–393 (SDSDSDSDINDDSE) the composition is skewed to acidic residues. A compositionally biased stretch (low complexity) spans 407–419 (ELGSGSESEVESD). One copy of the WD 7 repeat lies at 431 to 472 (CTGSDLPGDIEGSEGENNSNDDDNHDDREELWKELDQPTSDE). The span at 441-454 (EGSEGENNSNDDDN) shows a compositional bias: acidic residues. A compositionally biased stretch (basic and acidic residues) spans 455–466 (HDDREELWKELD). The segment covering 478–492 (KRSLKVKDKKNKKFK) has biased composition (basic residues).

It belongs to the WD repeat WDR55 family.

The protein resides in the nucleus. Its subcellular location is the nucleolus. This Candida glabrata (strain ATCC 2001 / BCRC 20586 / JCM 3761 / NBRC 0622 / NRRL Y-65 / CBS 138) (Yeast) protein is WD repeat-containing protein JIP5 (JIP5).